Here is a 304-residue protein sequence, read N- to C-terminus: Glycine--tRNA ligase alpha subunit (304 aa).

This sequence belongs to the class-II aminoacyl-tRNA synthetase family. As to quaternary structure, tetramer of two alpha and two beta subunits.

The protein localises to the cytoplasm. The catalysed reaction is tRNA(Gly) + glycine + ATP = glycyl-tRNA(Gly) + AMP + diphosphate. In Yersinia enterocolitica serotype O:8 / biotype 1B (strain NCTC 13174 / 8081), this protein is Glycine--tRNA ligase alpha subunit.